An 819-amino-acid polypeptide reads, in one-letter code: FYN-binding protein 1 (819 aa).

Polar residues predominate over residues 1-45 (MAKFNTGSNPTEEAATSSRPFKVAGQSSPSGIQSRKNLFDNQGNA). Residues 1–490 (MAKFNTGSNP…REKKEQELKK (490 aa)) form a disordered region. K3 bears the N6-acetyllysine mark. Phosphoserine is present on residues S28 and S46. The segment covering 69-79 (TYEEKPEKEPK) has biased composition (basic and acidic residues). Over residues 150–160 (GPKPGPAPPVP) the composition is skewed to pro residues. S222 carries the post-translational modification Phosphoserine. 2 stretches are compositionally biased toward basic and acidic residues: residues 237–248 (PPKEDPEDKDHG) and 273–285 (NFEE…KTDL). S318 carries the post-translational modification Phosphoserine. Pro residues-rich tracts occupy residues 342–351 (GPPPPKPNRP) and 380–412 (LPPP…PRNI). Residues 439–453 (LEEEQESEGETYEDI) are compositionally biased toward acidic residues. S445 bears the Phosphoserine mark. A coiled-coil region spans residues 448–495 (ETYEDIDSSKERDKKREKEEKKRLELERKEQKEREKKEQELKKKFKLT). Over residues 454–489 (DSSKERDKKREKEEKKRLELERKEQKEREKKEQELK) the composition is skewed to basic and acidic residues. A Nuclear localization signal motif is present at residues 479 to 493 (KEREKKEQELKKKFK). The SH3 1 domain maps to 499 to 560 (QVIHHAKACC…KTTAVEIDYD (62 aa)). Y559 carries the post-translational modification Phosphotyrosine. S561 and S568 each carry phosphoserine. The short motif at 584–587 (YDDV) is the SH2-binding; to LCP2 element. Disordered stretches follow at residues 589 to 635 (EQDA…DEKT) and 649 to 728 (KDDR…EKEE). The segment covering 610-626 (TDDEIYDGIEEEDDDDG) has biased composition (acidic residues). The SH2-binding; to FYN signature appears at 615 to 618 (YDGI). Basic and acidic residues predominate over residues 649-664 (KDDRKKSIREKPKVSE). The segment covering 668–677 (NEGSSLPSQH) has biased composition (polar residues). Residues 682 to 692 (VGEEVYDDVDA) are compositionally biased toward acidic residues. Y687 carries the phosphotyrosine modification. The Nuclear localization signal motif lies at 710-736 (RAKTEEKDPKKLKKQEKEEKDLRKKFK). Residues 711–728 (AKTEEKDPKKLKKQEKEE) are compositionally biased toward basic and acidic residues. The SH3 2 domain maps to 736–804 (KYDGEIRVLY…LRSYLVDNDG (69 aa)).

In terms of assembly, part of a complex consisting of SKAP2, FYB1 and PTPNS1. Part of a complex consisting of SKAP2, FYB1 and PIRB. Part of a complex consisting of SKAP1, FYB1 and CLNK. Interacts with CLNK (via its SH2 domain); this interaction allows SKAP1 and FYB1 to recruit FYN to the complex, thus promoting the phosphorylation of CLNK by FYN. Interacts with FYN. Interacts with LCP2. Interacts with SKAP1. Interacts with SKAP2. Interacts with FASLG. Interacts with EVL. Interacts with TMEM47. Interacts with LCK. In terms of processing, T-cell receptor ligation leads to increased tyrosine phosphorylation. Expressed in hematopoietic tissues such as myeloid and T-cells, spleen and thymus. Not expressed in B-cells, nor in non-lymphoid tissues. FYB-130 is preferentially expressed in mature T-cells compared to FYB-120, whereas thymocytes showed a greater relative amount of FYB-120. Expressed in podocytes.

It is found in the cytoplasm. The protein localises to the nucleus. Its subcellular location is the cell junction. In terms of biological role, acts as an adapter protein of the FYN and LCP2 signaling cascades in T-cells. May play a role in linking T-cell signaling to remodeling of the actin cytoskeleton. Modulates the expression of IL2. Involved in platelet activation. Prevents the degradation of SKAP1 and SKAP2. May be involved in high affinity immunoglobulin epsilon receptor signaling in mast cells. This is FYN-binding protein 1 (Fyb1) from Mus musculus (Mouse).